The chain runs to 304 residues: Nod factor export ATP-binding protein I (304 aa).

Residues 6 to 236 (IDFQQVEKRY…EIGCDVIEIY (231 aa)) form the ABC transporter domain. 38 to 45 (GPNGAGKT) is an ATP binding site.

The protein belongs to the ABC transporter superfamily. Lipooligosaccharide exporter (TC 3.A.1.102) family. As to quaternary structure, the complex is composed of two ATP-binding proteins (NodI) and two transmembrane proteins (NodJ).

Its subcellular location is the cell inner membrane. Functionally, part of the ABC transporter complex NodIJ involved in the export of the nodulation factors (Nod factors), the bacterial signal molecules that induce symbiosis and subsequent nodulation induction. Nod factors are LCO (lipo-chitin oligosaccharide), a modified beta-1,4-linked N-acetylglucosamine oligosaccharide. This subunit is responsible for energy coupling to the transport system. The sequence is that of Nod factor export ATP-binding protein I from Burkholderia thailandensis (strain ATCC 700388 / DSM 13276 / CCUG 48851 / CIP 106301 / E264).